Consider the following 118-residue polypeptide: Ribonuclease P protein component (118 aa).

This sequence belongs to the RnpA family. In terms of assembly, consists of a catalytic RNA component (M1 or rnpB) and a protein subunit.

It catalyses the reaction Endonucleolytic cleavage of RNA, removing 5'-extranucleotides from tRNA precursor.. RNaseP catalyzes the removal of the 5'-leader sequence from pre-tRNA to produce the mature 5'-terminus. It can also cleave other RNA substrates such as 4.5S RNA. The protein component plays an auxiliary but essential role in vivo by binding to the 5'-leader sequence and broadening the substrate specificity of the ribozyme. The protein is Ribonuclease P protein component of Bifidobacterium animalis subsp. lactis (strain AD011).